Reading from the N-terminus, the 204-residue chain is COBRA-like protein 5 (204 aa).

The first 24 residues, 1 to 24 (MESLFSTMIVLLLVSFSCLISTEA), serve as a signal peptide directing secretion. Residues Asn-31 and Asn-195 are each glycosylated (N-linked (GlcNAc...) asparagine).

The protein belongs to the COBRA family. As to expression, expressed in roots, stems, leaves, flowers and siliques.

The polypeptide is COBRA-like protein 5 (COBL5) (Arabidopsis thaliana (Mouse-ear cress)).